Reading from the N-terminus, the 499-residue chain is Probable lipid II flippase MurJ (499 aa).

The next 14 helical transmembrane spans lie at 4–24 (LFRA…FGYV), 26–46 (DATV…FIAF), 88–108 (LLIT…EEII), 130–150 (FTIL…ILLV), 154–174 (FFVP…SLVI), 184–204 (LALA…FLLF), 227–247 (FLFT…DTFL), 265–285 (IYLL…LALV), 297–317 (TALK…FFLS), 335–355 (LFYT…YSLQ), 375–395 (AFLS…LLNF), 396–416 (GVYS…VYLY), 425–445 (IPFG…GLVY), and 455–475 (FILV…LIIL).

It belongs to the MurJ/MviN family.

The protein resides in the cell inner membrane. It functions in the pathway cell wall biogenesis; peptidoglycan biosynthesis. Its function is as follows. Involved in peptidoglycan biosynthesis. Transports lipid-linked peptidoglycan precursors from the inner to the outer leaflet of the cytoplasmic membrane. This is Probable lipid II flippase MurJ from Aquifex aeolicus (strain VF5).